The primary structure comprises 375 residues: Cell division protein ZapE (375 aa).

ATP is bound at residue 78 to 85; it reads GGVGRGKT.

Belongs to the AFG1 ATPase family. ZapE subfamily. In terms of assembly, interacts with FtsZ.

Its subcellular location is the cytoplasm. Reduces the stability of FtsZ polymers in the presence of ATP. In Escherichia coli O157:H7, this protein is Cell division protein ZapE.